We begin with the raw amino-acid sequence, 323 residues long: uncharacterized protein (323 aa).

Residues 1–45 form the signal peptide; sequence MLATLSQIRAWSTEHLIDAAGYWTETADRWEDVFLQMRNQAHAIA. The segment at 186 to 227 is disordered; the sequence is FKQDGPTPPPPGAPHPSGGADGPYSDPITSMMLPPAGTEAPV. 2 helical membrane-spanning segments follow: residues 269 to 289 and 290 to 310; these read SAEW…VVGT and ALAI…LLGV.

Its subcellular location is the cell membrane. This is an uncharacterized protein from Mycobacterium tuberculosis (strain CDC 1551 / Oshkosh).